A 624-amino-acid chain; its full sequence is MQPEPKPSGAPRSSQFLPLWSKCPEGAGDAVMYASTECKAEVTPSQDGNRTFSYTLEDHTKQAFGIMNELRLSQQLCDVTLQVKYEDIPAAQFMAHKVVLASSSPVFKAMFTNGLREQGMEVVSIEGIHPKVMERLIEFAYTASISVGEKCVLHVMNGAVMYQIDSVVRACSDFLVQQLDPSNAIGIANFAEQIGCTELHQRAREYIYMHFGEVAKQEEFFNLSHCQLATLISRDDLNVRCESEVFHACIDWVKYDCPQRRFYVQALLRAVRCHALTPRFLQTQLQKCEILQADARCKDYLVQIFQELTLHKPTQAVPCRAPKVGRLIYTAGGYFRQSLSYLEAYNPSNGSWLRLADLQVPRSGLAGCVVGGLLYAVGGRNNSPDGNTDSSALDCYNPMTNQWSPCASLSVPRNRSGGGVIDGHIYAVGGSHGCIHHSSVERYEPDRDEWHLVAPMLTRRIGVGVAVLNRLLYAVGGFDGTNRLNSAECYYPERNEWRMITPMNTIRSGAGVCVLHSCIYAAGGYDGQDQLNSVERYDVETETWTFVASMKHRRSALGIAVHQGRIYVLGGYDGHTFLDSVECYDPDTDTWSEVTRLTSGRSGVGVAVTMEPCRKQIDQQNCTC.

Cys-38 carries the S-(2-succinyl)cysteine modification. Residues 77–149 (CDVTLQVKYE…AYTASISVGE (73 aa)) form the BTB domain. An N5-[4-(S-L-cysteinyl)-5-methyl-1H-imidazol-2-yl]-L-ornithine (Arg-Cys) (interchain with C-151 in KEAP1) cross-link involves residue Arg-135. 2 positions are modified to S-(2-succinyl)cysteine: Cys-151 and Cys-241. At Cys-151 the chain carries S-(2,3-dicarboxypropyl)cysteine; alternate. Cys-151 bears the S-nitrosocysteine; alternate mark. Residue Cys-151 forms an N5-[4-(S-L-cysteinyl)-5-methyl-1H-imidazol-2-yl]-L-ornithine (Cys-Arg) (interchain with R-135 in KEAP1) linkage. Positions 184–286 (AIGIANFAEQ…TPRFLQTQLQ (103 aa)) constitute a BACK domain. Residues Cys-257 and Cys-273 each carry the S-(2,3-dicarboxypropyl)cysteine modification. S-(2-succinyl)cysteine is present on residues Cys-288 and Cys-319. S-(2,3-dicarboxypropyl)cysteine; alternate is present on Cys-288. 6 Kelch repeats span residues 327 to 372 (LIYT…VVGG), 373 to 423 (LLYA…VIDG), 424 to 470 (HIYA…VLNR), 471 to 517 (LLYA…VLHS), 519 to 564 (IYAA…VHQG), and 565 to 611 (RIYV…VTME). Residue Cys-434 is modified to S-cGMP-cysteine. Cys-613 carries the S-(2-succinyl)cysteine modification.

The protein belongs to the KEAP1 family. Component of the BCR(KEAP1) E3 ubiquitin ligase complex, at least composed of 2 molecules of CUL3, 2 molecules of KEAP1, and RBX1. Interacts with NFE2L2/NRF2; the interaction is direct. Forms a ternary complex with NFE2L2/NRF2 and PGAM5. Interacts with (phosphorylated) SQSTM1/p62; the interaction is direct and inactivates the BCR(KEAP1) complex by sequestering it in inclusion bodies, promoting its degradation. Interacts with NFE2L1. Interacts with BPTF and PTMA. Interacts with MAP1LC3B. Interacts indirectly with ENC1. Interacts with SESN1 and SESN2. Interacts with HSP90AA1 and HSP90AB1. Interacts with PGCKA1; this interaction prevents the ubiquitination of KEAP1 by TRIM25, thus protecting KEAP1 from degradation. Post-translationally, non-enzymatic covalent modifications of reactive cysteines by electrophile metabolites inactivate the BCR(KEAP1) complex. Accumulation of fumarate promotes the formation of cysteine S-succination (S-(2-succinyl)cysteine), leading to inactivate the BCR(KEAP1) complex and promote NFE2L2/NRF2 nuclear accumulation and activation. Nitric oxide-dependent 8-Nitro-cGMP formation promotes cysteine guanylation (S-cGMP-cysteine), leading to NFE2L2/NRF2 nuclear accumulation and activation. Itaconate, an anti-inflammatory metabolite generated in response to lipopolysaccharide, alkylates cysteines, activating NFE2L2/NRF2. Methylglyoxal, a reactive metabolite that accumulates when the glycolytic enzyme PGK1 is inhibited, promotes formation of a methylimidazole cross-link between proximal Cys-151 and Arg-135 on another KEAP1 molecule, resulting in an inactive dimer that inactivates the BCR(KEAP1) complex. Degraded via a proteasomal-independent process during selective autophagy: interaction with phosphorylated SQSTM1/p62 sequesters KEAP1 in inclusion bodies, leading to its degradation. In terms of processing, auto-ubiquitinated by the BCR(KEAP1) complex. Quinone-induced oxidative stress, but not sulforaphane, increases its ubiquitination. Ubiquitination and subsequent degradation is most pronounced following prolonged exposure of cells to oxidative stress, particularly in glutathione-deficient cells that are highly susceptible to oxidative stress. Deubiquitinated by USP25; leading to stabilization. Ubiquitinated by TRIM25; leading to degradation upon ER stress.

The protein localises to the cytoplasm. Its subcellular location is the nucleus. The protein operates within protein modification; protein ubiquitination. Its activity is regulated as follows. Ubiquitin ligase activity of the BCR(KEAP1) complex is inhibited by oxidative stress and electrophile metabolites such as sulforaphane. Electrophile metabolites react with reactive cysteine residues in KEAP1 and trigger non-enzymatic covalent modifications of these cysteine residues, leading to inactivate the ubiquitin ligase activity of the BCR(KEAP1) complex. Selective autophagy also inactivates the BCR(KEAP1) complex via interaction between KEAP1 and SQSTM1/p62, which sequesters the complex in inclusion bodies and promotes its degradation. Substrate-specific adapter of a BCR (BTB-CUL3-RBX1) E3 ubiquitin ligase complex that regulates the response to oxidative stress by targeting NFE2L2/NRF2 for ubiquitination. KEAP1 acts as a key sensor of oxidative and electrophilic stress: in normal conditions, the BCR(KEAP1) complex mediates ubiquitination and degradation of NFE2L2/NRF2, a transcription factor regulating expression of many cytoprotective genes. In response to oxidative stress, different electrophile metabolites trigger non-enzymatic covalent modifications of highly reactive cysteine residues in KEAP1, leading to inactivate the ubiquitin ligase activity of the BCR(KEAP1) complex, promoting NFE2L2/NRF2 nuclear accumulation and expression of phase II detoxifying enzymes. In response to selective autophagy, KEAP1 is sequestered in inclusion bodies following its interaction with SQSTM1/p62, leading to inactivation of the BCR(KEAP1) complex and activation of NFE2L2/NRF2. The BCR(KEAP1) complex also mediates ubiquitination of SQSTM1/p62, increasing SQSTM1/p62 sequestering activity and degradation. The BCR(KEAP1) complex also targets BPTF and PGAM5 for ubiquitination and degradation by the proteasome. This is Kelch-like ECH-associated protein 1 from Rattus norvegicus (Rat).